Here is a 190-residue protein sequence, read N- to C-terminus: Lipid A acyltransferase PagP (190 aa).

The signal sequence occupies residues 1–18; sequence MKRLISCLTIICALNASA. Residues His-60, Asp-103, and Ser-104 contribute to the active site.

The protein belongs to the lipid A palmitoyltransferase family. In terms of assembly, homodimer.

It is found in the cell outer membrane. It catalyses the reaction a lipid A + a 1,2-diacyl-sn-glycero-3-phosphocholine = a hepta-acyl lipid A + a 2-acyl-sn-glycero-3-phosphocholine. It carries out the reaction a lipid IVA + a 1,2-diacyl-sn-glycero-3-phosphocholine = a lipid IVB + a 2-acyl-sn-glycero-3-phosphocholine. The enzyme catalyses a lipid IIA + a 1,2-diacyl-sn-glycero-3-phosphocholine = a lipid IIB + a 2-acyl-sn-glycero-3-phosphocholine. Its function is as follows. Transfers a fatty acid residue from the sn-1 position of a phospholipid to the N-linked hydroxyfatty acid chain on the proximal unit of lipid A or its precursors. In Legionella pneumophila (strain Corby), this protein is Lipid A acyltransferase PagP.